Here is a 237-residue protein sequence, read N- to C-terminus: Class B acid phosphatase (237 aa).

Residues 1–25 form the signal peptide; the sequence is MRKITLALSAACLLFSLNNAVVARA. D69 serves as the catalytic Nucleophile. The Mg(2+) site is built by D69 and D71. The active-site Proton donor is D71. Substrate contacts are provided by residues 137 to 138 and K177; that span reads TG. D192 lines the Mg(2+) pocket.

The protein belongs to the class B bacterial acid phosphatase family. As to quaternary structure, homotetramer. It depends on Mg(2+) as a cofactor.

The protein localises to the periplasm. The enzyme catalyses a phosphate monoester + H2O = an alcohol + phosphate. Dephosphorylates several organic phosphate monoesters. Also has a phosphotransferase activity catalyzing the transfer of low-energy phosphate groups from organic phosphate monoesters to free hydroxyl groups of various organic compounds. The polypeptide is Class B acid phosphatase (Enterobacter sp. (strain 638)).